A 409-amino-acid polypeptide reads, in one-letter code: N-acetylglucosamine-6-phosphate deacetylase (409 aa).

A divalent metal cation is bound at residue E143. 154 to 155 (AH) is a binding site for substrate. H211 and H232 together coordinate a divalent metal cation. Residues 235–236 (NA), R243, and 269–272 (DGTH) contribute to the substrate site. D294 functions as the Proton donor/acceptor in the catalytic mechanism. Residue 328–330 (LSG) participates in substrate binding.

Belongs to the metallo-dependent hydrolases superfamily. NagA family. A divalent metal cation is required as a cofactor.

It carries out the reaction N-acetyl-D-glucosamine 6-phosphate + H2O = D-glucosamine 6-phosphate + acetate. Its pathway is amino-sugar metabolism; N-acetylneuraminate degradation. Functionally, hydrolyzes the N-glycolyl group from N-glycolylglucosamine 6-phosphate (GlcNGc-6-P) in the N-glycolylneuraminic acid (Neu5Gc) degradation pathway. Although human is not able to catalyze formation of Neu5Gc due to the inactive CMAHP enzyme, Neu5Gc is present in food and must be degraded. The chain is N-acetylglucosamine-6-phosphate deacetylase (AMDHD2) from Homo sapiens (Human).